The primary structure comprises 62 residues: Alpha-conotoxin-like Ca1.1 (62 aa).

A signal peptide spans 1-21 (MGMRMMFTVFLLVVLATTVVS). Positions 22–46 (FTSDRASDGRNAAANAFDLIALIAR) are excised as a propeptide. At Q47 the chain carries Pyrrolidone carboxylic acid. Cystine bridges form between C49–C55 and C50–C61.

Belongs to the conotoxin A superfamily. As to expression, expressed by the venom duct.

It is found in the secreted. Alpha-conotoxins act on postsynaptic membranes, they bind to the nicotinic acetylcholine receptors (nAChR) and thus inhibit them. The polypeptide is Alpha-conotoxin-like Ca1.1 (Conus caracteristicus (Characteristic cone)).